Reading from the N-terminus, the 76-residue chain is Large ribosomal subunit protein uL29 (76 aa).

The protein belongs to the universal ribosomal protein uL29 family.

This is Large ribosomal subunit protein uL29 from Corynebacterium efficiens (strain DSM 44549 / YS-314 / AJ 12310 / JCM 11189 / NBRC 100395).